The primary structure comprises 161 residues: RNA pyrophosphohydrolase (161 aa).

Positions 12–154 (PYRPGVGMMI…KRKLYQAVVK (143 aa)) constitute a Nudix hydrolase domain. A Nudix box motif is present at residues 46–67 (GGIVPGETPSIAAMREMLEEIG).

Belongs to the Nudix hydrolase family. RppH subfamily. It depends on a divalent metal cation as a cofactor.

Its function is as follows. Accelerates the degradation of transcripts by removing pyrophosphate from the 5'-end of triphosphorylated RNA, leading to a more labile monophosphorylated state that can stimulate subsequent ribonuclease cleavage. This Rickettsia conorii (strain ATCC VR-613 / Malish 7) protein is RNA pyrophosphohydrolase.